Here is a 347-residue protein sequence, read N- to C-terminus: Haptoglobin (347 aa).

A signal peptide spans Met1–Ala18. Positions Asp31 to Ala88 constitute a Sushi domain. 4 disulfide bridges follow: Cys52/Cys86, Cys90/Cys207, Cys250/Cys281, and Cys292/Cys322. The Peptidase S1 domain occupies Ile103–Ala345. N-linked (GlcNAc...) asparagine glycans are attached at residues Asn148, Asn182, and Asn264. Residues Val259–Asn264 are interaction with CD163.

The protein belongs to the peptidase S1 family. In terms of assembly, tetramer of two alpha and two beta chains; disulfide-linked. The hemoglobin/haptoglobin complex is composed of a haptoglobin dimer bound to two hemoglobin alpha-beta dimers. Interacts with CD163. Interacts with ERGIC3. In terms of tissue distribution, expressed by the liver and secreted in plasma.

It localises to the secreted. Functionally, as a result of hemolysis, hemoglobin is found to accumulate in the kidney and is secreted in the urine. Haptoglobin captures, and combines with free plasma hemoglobin to allow hepatic recycling of heme iron and to prevent kidney damage. Haptoglobin also acts as an antioxidant, has antibacterial activity and plays a role in modulating many aspects of the acute phase response. Hemoglobin/haptoglobin complexes are rapidly cleared by the macrophage CD163 scavenger receptor expressed on the surface of liver Kupfer cells through an endocytic lysosomal degradation pathway. This Mus caroli (Ryukyu mouse) protein is Haptoglobin (Hp).